Consider the following 480-residue polypeptide: NADH-quinone oxidoreductase subunit N 1 (480 aa).

Helical transmembrane passes span 12 to 32 (LSMP…IGVF), 38 to 58 (TPTV…WLVL), 78 to 98 (FMKV…VGHA), 106 to 126 (FEFP…ISAN), 128 to 148 (LISL…VAAI), 163 to 183 (FVLG…VYGF), 203 to 223 (LGLV…ISAV), 241 to 261 (TAFF…RIVI), 271 to 291 (WQQI…FAAI), 303 to 323 (SSIG…MAGV), 326 to 346 (VILY…CILA), 372 to 392 (ATVL…AGFF), 396 to 416 (FVFV…GVLA), and 449 to 469 (LVFG…GPLG).

This sequence belongs to the complex I subunit 2 family. NDH-1 is composed of 14 different subunits. Subunits NuoA, H, J, K, L, M, N constitute the membrane sector of the complex.

It localises to the cell inner membrane. The catalysed reaction is a quinone + NADH + 5 H(+)(in) = a quinol + NAD(+) + 4 H(+)(out). Its function is as follows. NDH-1 shuttles electrons from NADH, via FMN and iron-sulfur (Fe-S) centers, to quinones in the respiratory chain. The immediate electron acceptor for the enzyme in this species is believed to be ubiquinone. Couples the redox reaction to proton translocation (for every two electrons transferred, four hydrogen ions are translocated across the cytoplasmic membrane), and thus conserves the redox energy in a proton gradient. This Rhizobium meliloti (strain 1021) (Ensifer meliloti) protein is NADH-quinone oxidoreductase subunit N 1.